Consider the following 293-residue polypeptide: Notch homolog 2 N-terminal-like protein C (293 aa).

EGF-like domains follow at residues 42–81 (PPRM…EYCQ), 82–120 (HRDP…EDCQ), 123–161 (TSHP…KECQ), and 162–198 (WTDA…QKCE). Disulfide bonds link C46–C59, C53–C69, C71–C80, C86–C97, C91–C108, C110–C119, C127–C139, C133–C149, C151–C160, C166–C177, C171–C186, C188–C197, C204–C216, C210–C225, C227–C236, C243–C254, and C248–C264. Residue N64 is glycosylated (N-linked (GlcNAc...) asparagine). A glycan (N-linked (GlcNAc...) asparagine) is linked at N173. The region spanning 200 to 237 (DVNECDIPGHCQHGGTCLNLPGSYQCQCLQGFTGQYCD) is the EGF-like 5; calcium-binding domain. Residues 239–276 (LYVPCAPSPCVNGGTCRQTGDFTFECNCLPETVRRGTE) form the EGF-like 6 domain.

This sequence belongs to the NOTCH family. In terms of assembly, interacts with NOTCH2. Interacts with DLL1; the interaction is direct. Expressed in radial glia neural stem cells during cortical development.

Its subcellular location is the secreted. Its function is as follows. Human-specific protein that promotes neural progenitor proliferation and evolutionary expansion of the brain neocortex by regulating the Notch signaling pathway. Able to promote neural progenitor self-renewal, possibly by down-regulating neuronal differentiation genes, thereby delaying the differentiation of neuronal progenitors and leading to an overall final increase in neuronal production. Acts by enhancing the Notch signaling pathway via two different mechanisms that probably work in parallel to reach the same effect. Enhances Notch signaling pathway in a non-cell-autonomous manner via direct interaction with NOTCH2. Also promotes Notch signaling pathway in a cell-autonomous manner through inhibition of cis DLL1-NOTCH2 interactions, which promotes neuronal differentiation. This is Notch homolog 2 N-terminal-like protein C from Homo sapiens (Human).